An 843-amino-acid chain; its full sequence is Leucine--tRNA ligase (843 aa).

Residues 61–71 (PYPSGDLHMGH) carry the 'HIGH' region motif. The short motif at 606 to 610 (AMSKS) is the 'KMSKS' region element. Lys-609 contacts ATP.

Belongs to the class-I aminoacyl-tRNA synthetase family.

Its subcellular location is the cytoplasm. It carries out the reaction tRNA(Leu) + L-leucine + ATP = L-leucyl-tRNA(Leu) + AMP + diphosphate. This Arthrobacter sp. (strain FB24) protein is Leucine--tRNA ligase.